A 1376-amino-acid polypeptide reads, in one-letter code: Zinc finger MYM-type protein 2 (1376 aa).

Polar residues predominate over residues 30 to 53 (NVGNSFSGPPNPLVSRSSKFQNSS). 2 disordered regions span residues 30 to 56 (NVGNSFSGPPNPLVSRSSKFQNSSVED) and 85 to 158 (TSSK…FSSS). Glycyl lysine isopeptide (Lys-Gly) (interchain with G-Cter in SUMO2) cross-links involve residues K48, K88, K98, and K104. Positions 127 to 138 (TNQGQEKSSSNF) are enriched in polar residues. Residues 139–152 (IERRPSETKNRTND) show a composition bias toward basic and acidic residues. Glycyl lysine isopeptide (Lys-Gly) (interchain with G-Cter in SUMO2) cross-links involve residues K147, K253, and K297. The disordered stretch occupies residues 269–304 (DVFQNGESAPHHNPDSWISQSASFPRNQKQQGVDSL). Residues 284-302 (SWISQSASFPRNQKQQGVD) are compositionally biased toward polar residues. S305 is modified (phosphoserine). Residues K312, K324, K347, and K365 each participate in a glycyl lysine isopeptide (Lys-Gly) (interchain with G-Cter in SUMO2) cross-link. An MYM-type 1 zinc finger spans residues 326-362 (VKVTCANCKKPLQKGQTAYQRKGSAHLFCSTTCLSSF). Residues 368–408 (PKKLCVMCKKDITTMKGTIVAQVDSSESFQEFCSTSCLSLY) form an MYM-type 2 zinc finger. Glycyl lysine isopeptide (Lys-Gly) (interchain with G-Cter in SUMO2) cross-links involve residues K416, K440, K490, K502, K512, K528, and K531. 2 MYM-type zinc fingers span residues 420–455 (NKSRCTICGKLTEIRHEVSFKNMTHKLCSDHCFNRY) and 462–501 (IMNCCEQCGEYLPSKGAGNNVLVVDGQQKRFCCQSCVTEY). The MYM-type 5 zinc-finger motif lies at 532-569 (LTTCTGCRTQCRFFDMTQCIGPNGYMEPYCSTACMNSH). Residues K575, K602, K648, K657, K687, K699, and K708 each participate in a glycyl lysine isopeptide (Lys-Gly) (interchain with G-Cter in SUMO2) cross-link. The MYM-type 6 zinc-finger motif lies at 635–670 (QLKCNYCKNSFCSKPEILEWENKVHQFCSKTCSDDY). 2 MYM-type zinc fingers span residues 722–757 (RCVTCNYCSQLCKKGATKELDGVVRDFCSEDCCKKF) and 763–798 (KAARCDCCKSQGTLKERVQWRGEMKHFCDQHCLLRF). Glycyl lysine isopeptide (Lys-Gly) (interchain with G-Cter in SUMO2) cross-links involve residues K763, K787, K811, and K828. Residue S837 is modified to Phosphoserine. The interval 1027–1063 (VFGEEYEEQPRPRSKKKGTKRKAVSGYQSHDDSSDNS) is disordered. Positions 1038–1049 (PRSKKKGTKRKA) are enriched in basic residues. The residue at position 1063 (S1063) is a Phosphoserine. At T1375 the chain carries Phosphothreonine.

In terms of assembly, can form homodimers. May be a component of a BHC histone deacetylase complex that contains HDAC1, HDAC2, HMG20B/BRAF35, KDM1A, RCOR1/CoREST, PHF21A/BHC80, ZMYM2, ZNF217, ZMYM3, GSE1 and GTF2I. Interacts with FOXP1 and FOXP2. In terms of tissue distribution, low but widespread expression is detected in the developing kidney.

It localises to the nucleus. Its function is as follows. Involved in the negative regulation of transcription. The sequence is that of Zinc finger MYM-type protein 2 (Zmym2) from Mus musculus (Mouse).